We begin with the raw amino-acid sequence, 271 residues long: Large ribosomal subunit protein uL18 (271 aa).

Over residues 245 to 264 (IRENPCPPKKERTKPADAKR) the composition is skewed to basic and acidic residues. The tract at residues 245 to 271 (IRENPCPPKKERTKPADAKRWSPQAHL) is disordered.

It belongs to the universal ribosomal protein uL18 family. In terms of assembly, component of the large ribosomal subunit (LSU).

Its subcellular location is the cytoplasm. It localises to the nucleus. Functionally, component of the ribosome, a large ribonucleoprotein complex responsible for the synthesis of proteins in the cell. The small ribosomal subunit (SSU) binds messenger RNAs (mRNAs) and translates the encoded message by selecting cognate aminoacyl-transfer RNA (tRNA) molecules. The large subunit (LSU) contains the ribosomal catalytic site termed the peptidyl transferase center (PTC), which catalyzes the formation of peptide bonds, thereby polymerizing the amino acids delivered by tRNAs into a polypeptide chain. The nascent polypeptides leave the ribosome through a tunnel in the LSU and interact with protein factors that function in enzymatic processing, targeting, and the membrane insertion of nascent chains at the exit of the ribosomal tunnel. In Dunaliella salina (Green alga), this protein is Large ribosomal subunit protein uL18 (RPL5).